The following is a 286-amino-acid chain: Shikimate dehydrogenase (NADP(+)) (286 aa).

Residues 19 to 21 (SLS) and Thr-66 each bind shikimate. Lys-70 (proton acceptor) is an active-site residue. Asn-91 and Asp-107 together coordinate shikimate. Residues 129 to 133 (GSGGA) and Leu-229 each bind NADP(+). Tyr-231 lines the shikimate pocket. Gly-252 serves as a coordination point for NADP(+).

It belongs to the shikimate dehydrogenase family. As to quaternary structure, homodimer.

It carries out the reaction shikimate + NADP(+) = 3-dehydroshikimate + NADPH + H(+). Its pathway is metabolic intermediate biosynthesis; chorismate biosynthesis; chorismate from D-erythrose 4-phosphate and phosphoenolpyruvate: step 4/7. Its function is as follows. Involved in the biosynthesis of the chorismate, which leads to the biosynthesis of aromatic amino acids. Catalyzes the reversible NADPH linked reduction of 3-dehydroshikimate (DHSA) to yield shikimate (SA). The polypeptide is Shikimate dehydrogenase (NADP(+)) (Prochlorococcus marinus (strain MIT 9312)).